The primary structure comprises 232 residues: Small ribosomal subunit protein uS3 (232 aa).

The 69-residue stretch at 39 to 107 (VRQYLTKELK…PAQINIAEVR (69 aa)) folds into the KH type-2 domain.

Belongs to the universal ribosomal protein uS3 family. In terms of assembly, part of the 30S ribosomal subunit. Forms a tight complex with proteins S10 and S14.

Binds the lower part of the 30S subunit head. Binds mRNA in the 70S ribosome, positioning it for translation. This Aliivibrio salmonicida (strain LFI1238) (Vibrio salmonicida (strain LFI1238)) protein is Small ribosomal subunit protein uS3.